The primary structure comprises 229 residues: ATP synthase subunit a (229 aa).

Helical transmembrane passes span 25–45, 58–75, 81–101, 110–130, 141–161, 175–195, and 196–216; these read VHII…VLGA, FLEV…SVTG, FFPL…IGLV, SINT…FIGI, FLGP…IGHL, MMGH…FFAP, and LPIM…FFLL.

It belongs to the ATPase A chain family. As to quaternary structure, F-type ATPases have 2 components, CF(1) - the catalytic core - and CF(0) - the membrane proton channel. CF(1) has five subunits: alpha(3), beta(3), gamma(1), delta(1), epsilon(1). CF(0) has three main subunits: a(1), b(2) and c(9-12). The alpha and beta chains form an alternating ring which encloses part of the gamma chain. CF(1) is attached to CF(0) by a central stalk formed by the gamma and epsilon chains, while a peripheral stalk is formed by the delta and b chains.

The protein resides in the cell inner membrane. Its function is as follows. Key component of the proton channel; it plays a direct role in the translocation of protons across the membrane. This chain is ATP synthase subunit a, found in Desulfosudis oleivorans (strain DSM 6200 / JCM 39069 / Hxd3) (Desulfococcus oleovorans).